Consider the following 704-residue polypeptide: Polyribonucleotide nucleotidyltransferase (704 aa).

Positions 491 and 497 each coordinate Mg(2+). The KH domain occupies 558 to 617 (PNYAVIEINSDKIRDVIGKGGATIRQLTEDTGAVIDIDDNGTIRIFGENKAATKEAIRQI). Residues 627–695 (GKVYKGTVAR…NRGRIKLTMK (69 aa)) form the S1 motif domain.

The protein belongs to the polyribonucleotide nucleotidyltransferase family. As to quaternary structure, component of the RNA degradosome, which is a multiprotein complex involved in RNA processing and mRNA degradation. Requires Mg(2+) as cofactor.

Its subcellular location is the cytoplasm. It carries out the reaction RNA(n+1) + phosphate = RNA(n) + a ribonucleoside 5'-diphosphate. Functionally, involved in mRNA degradation. Catalyzes the phosphorolysis of single-stranded polyribonucleotides processively in the 3'- to 5'-direction. The sequence is that of Polyribonucleotide nucleotidyltransferase from Psychrobacter sp. (strain PRwf-1).